Reading from the N-terminus, the 263-residue chain is Alpha-tubulin N-acetyltransferase 2 (263 aa).

One can recognise an N-acetyltransferase domain in the interval 1–181; the sequence is MEIAFDLSSI…NKYAVFPNFF (181 aa). 115–128 serves as a coordination point for acetyl-CoA; the sequence is FFIVPTEQRSGNGF. Disordered regions lie at residues 191–224 and 236–263; these read TPRQ…RPRH and FPRG…EPIW. The segment covering 200–212 has biased composition (low complexity); it reads RASSAVSSHTTSR. Positions 253–263 are enriched in basic and acidic residues; that stretch reads LTRDQRHEPIW.

The protein belongs to the acetyltransferase ATAT1 family.

It catalyses the reaction L-lysyl-[alpha-tubulin] + acetyl-CoA = N(6)-acetyl-L-lysyl-[alpha-tubulin] + CoA + H(+). Functionally, specifically acetylates 'Lys-40' in alpha-tubulin/mec-12 on the lumenal side of microtubules. Promotes microtubule destabilization and accelerates microtubule dynamics; this activity may be independent of acetylation activity. Acetylates alpha-tubulin with a slow enzymatic rate, due to a catalytic site that is not optimized for acetyl transfer. Enters the microtubule through each end and diffuses quickly throughout the lumen of microtubules. Acetylates only long/old microtubules because of its slow acetylation rate since it does not have time to act on dynamically unstable microtubules before the enzyme is released. Required for the maintenance of touch receptor neurons and possibly other type of neurons involved in locomotion. The chain is Alpha-tubulin N-acetyltransferase 2 (atat-2) from Caenorhabditis briggsae.